The following is a 240-amino-acid chain: tRNA (guanine-N(1)-)-methyltransferase (240 aa).

S-adenosyl-L-methionine is bound by residues G111 and 130–135 (IGDYVI).

This sequence belongs to the RNA methyltransferase TrmD family. In terms of assembly, homodimer.

It localises to the cytoplasm. The enzyme catalyses guanosine(37) in tRNA + S-adenosyl-L-methionine = N(1)-methylguanosine(37) in tRNA + S-adenosyl-L-homocysteine + H(+). Its function is as follows. Specifically methylates guanosine-37 in various tRNAs. The protein is tRNA (guanine-N(1)-)-methyltransferase of Mycoplasma capricolum subsp. capricolum (strain California kid / ATCC 27343 / NCTC 10154).